Reading from the N-terminus, the 161-residue chain is Phosphopantetheine adenylyltransferase (161 aa).

Threonine 10 contacts substrate. Residues 10–11 (TF) and histidine 18 contribute to the ATP site. Substrate is bound by residues lysine 42, leucine 74, and arginine 88. Residues 89–91 (GLR), glutamate 99, and 124–130 (NAFISSS) each bind ATP.

The protein belongs to the bacterial CoaD family. As to quaternary structure, homohexamer. Mg(2+) is required as a cofactor.

It localises to the cytoplasm. It catalyses the reaction (R)-4'-phosphopantetheine + ATP + H(+) = 3'-dephospho-CoA + diphosphate. It participates in cofactor biosynthesis; coenzyme A biosynthesis; CoA from (R)-pantothenate: step 4/5. In terms of biological role, reversibly transfers an adenylyl group from ATP to 4'-phosphopantetheine, yielding dephospho-CoA (dPCoA) and pyrophosphate. This Wolinella succinogenes (strain ATCC 29543 / DSM 1740 / CCUG 13145 / JCM 31913 / LMG 7466 / NCTC 11488 / FDC 602W) (Vibrio succinogenes) protein is Phosphopantetheine adenylyltransferase.